The sequence spans 415 residues: Dynein assembly factor with WD repeat domains 1 (415 aa).

8 WD repeats span residues 90–129 (AHILPLTNVALNKAGSCFITGSYDRTCKVWDTASGEELHT), 132–174 (GHKN…HTFR), 175–214 (GHTAEIVCLSFNPQSTVVATGSMDTTAKLWDIQNGEEVVT), 217–256 (GHLAEIISLSFDTSGDRIITGSFDHTVVVWDASTGRKVHT), 259–298 (GHCAEISSALFNWDCSLILTGSMDKTCMLWDATSGKYVAT), 301–340 (GHDDEILDSCFDYTGKLIATASADGTARVYNATTRKCVTK), 343–384 (GHEG…QVLE), and 386–415 (HTDEIFSCAFNYKGNIVITGSKDNSCRIWR).

The protein belongs to the WD repeat WDR69 family. In terms of assembly, interacts with IFT46. In terms of tissue distribution, in early mouse embryos, expression is limited to distal, motile ciliated cells of the node.

The protein localises to the cytoplasm. Its subcellular location is the cytoskeleton. The protein resides in the flagellum basal body. It localises to the flagellum axoneme. In terms of biological role, required for axonemal dynein assembly and ciliary motility in ciliated organs, including Kupffer's vesicle, during embryogenesis. Facilitates the onset of robust cilia motility during development. The polypeptide is Dynein assembly factor with WD repeat domains 1 (Mus musculus (Mouse)).